Consider the following 153-residue polypeptide: Aspartate carbamoyltransferase regulatory chain (153 aa).

Residues cysteine 109, cysteine 114, cysteine 138, and cysteine 141 each contribute to the Zn(2+) site.

This sequence belongs to the PyrI family. In terms of assembly, contains catalytic and regulatory chains. It depends on Zn(2+) as a cofactor.

Its function is as follows. Involved in allosteric regulation of aspartate carbamoyltransferase. The polypeptide is Aspartate carbamoyltransferase regulatory chain (Nitrosopumilus maritimus (strain SCM1)).